Consider the following 557-residue polypeptide: Formate--tetrahydrofolate ligase (557 aa).

66-73 (TPAGEGKS) contributes to the ATP binding site.

It belongs to the formate--tetrahydrofolate ligase family.

It catalyses the reaction (6S)-5,6,7,8-tetrahydrofolate + formate + ATP = (6R)-10-formyltetrahydrofolate + ADP + phosphate. Its pathway is one-carbon metabolism; tetrahydrofolate interconversion. This is Formate--tetrahydrofolate ligase from Clostridium botulinum (strain 657 / Type Ba4).